Consider the following 312-residue polypeptide: Olfactory receptor 2T8 (312 aa).

Over 1–26 (MENGSYTSYFILLGLFNHTRAHQVLF) the chain is Extracellular. Residues N3 and N17 are each glycosylated (N-linked (GlcNAc...) asparagine). Residues 27–47 (MMVLSIVLTSLFGNSLMILLI) form a helical membrane-spanning segment. Topologically, residues 48–55 (HWDHRLHT) are cytoplasmic. Residues 56–76 (PMYFLLSQLSLMDVMLVSTTV) form a helical membrane-spanning segment. Residues 77 to 96 (PKMAADYLTGSKAISRAGCG) are Extracellular-facing. A disulfide bridge connects residues C95 and C177. Residues 97–117 (AQIFFLPTLGGGECFLLAAMA) form a helical membrane-spanning segment. Topologically, residues 118–143 (YDRYAAVCHPLRYPTLMSWQLCLRMN) are cytoplasmic. Residues 144 to 164 (LSCWLLGAADGLLQAVATLSF) form a helical membrane-spanning segment. Residues 165–201 (PYCGAHEIDHFFCETPVLVRLACADTSVFENAMYICC) lie on the Extracellular side of the membrane. A helical transmembrane segment spans residues 202 to 222 (VLMLLVPFSLILSSYGLILAA). Topologically, residues 223–234 (VLHMRSTEARKK) are cytoplasmic. A helical transmembrane segment spans residues 235–255 (AFATCSSHVAVVGLFYGAAIF). Topologically, residues 256–269 (TYMRPKSHRSTNHD) are extracellular. The helical transmembrane segment at 270-290 (KVVSAFYTMFTPLLNPLIYSV) threads the bilayer. Residues 291 to 312 (KNSEVKGALTRCMGRCVALSRE) are Cytoplasmic-facing.

The protein belongs to the G-protein coupled receptor 1 family.

The protein localises to the cell membrane. Its function is as follows. Odorant receptor. This is Olfactory receptor 2T8 (OR2T8) from Homo sapiens (Human).